The sequence spans 116 residues: Aspartate 1-decarboxylase (116 aa).

The active-site Schiff-base intermediate with substrate; via pyruvic acid is the S25. Residue S25 is modified to Pyruvic acid (Ser). Position 57 (T57) interacts with substrate. Y58 serves as the catalytic Proton donor. 73 to 75 (GAA) contacts substrate.

The protein belongs to the PanD family. Heterooctamer of four alpha and four beta subunits. Pyruvate serves as cofactor. Is synthesized initially as an inactive proenzyme, which is activated by self-cleavage at a specific serine bond to produce a beta-subunit with a hydroxyl group at its C-terminus and an alpha-subunit with a pyruvoyl group at its N-terminus.

It localises to the cytoplasm. The catalysed reaction is L-aspartate + H(+) = beta-alanine + CO2. Its pathway is cofactor biosynthesis; (R)-pantothenate biosynthesis; beta-alanine from L-aspartate: step 1/1. Catalyzes the pyruvoyl-dependent decarboxylation of aspartate to produce beta-alanine. The sequence is that of Aspartate 1-decarboxylase from Leptospira interrogans serogroup Icterohaemorrhagiae serovar copenhageni (strain Fiocruz L1-130).